A 522-amino-acid chain; its full sequence is Ribonuclease Y (522 aa).

A helical transmembrane segment spans residues 2 to 22 (WVEILVGSSAAIISGAAGYLL). A KH domain is found at 212-278 (LINTVSIPSE…TKVIELLVED (67 aa)). The 94-residue stretch at 338–431 (ALGHSLEVAH…VCAADTLSAA (94 aa)) folds into the HD domain.

It belongs to the RNase Y family.

The protein localises to the cell membrane. Functionally, endoribonuclease that initiates mRNA decay. The sequence is that of Ribonuclease Y from Nitratiruptor sp. (strain SB155-2).